Reading from the N-terminus, the 451-residue chain is UPF0210 protein CLH_1879 (451 aa).

Belongs to the UPF0210 family. As to quaternary structure, homodimer.

The protein is UPF0210 protein CLH_1879 of Clostridium botulinum (strain Alaska E43 / Type E3).